A 177-amino-acid polypeptide reads, in one-letter code: Isopentenyl-diphosphate Delta-isomerase (177 aa).

Mn(2+) is bound by residues His22 and His28. The 135-residue stretch at 26–160 (LRHMAISVFV…PERFTPWLRI (135 aa)) folds into the Nudix hydrolase domain. Residue Cys62 is part of the active site. His64 contributes to the Mn(2+) binding site. Glu82 contacts Mg(2+). Mn(2+) contacts are provided by Glu108 and Glu110. The active site involves Glu110.

The protein belongs to the IPP isomerase type 1 family. Mg(2+) is required as a cofactor. The cofactor is Mn(2+).

The protein localises to the cytoplasm. It carries out the reaction isopentenyl diphosphate = dimethylallyl diphosphate. It functions in the pathway isoprenoid biosynthesis; dimethylallyl diphosphate biosynthesis; dimethylallyl diphosphate from isopentenyl diphosphate: step 1/1. It participates in porphyrin-containing compound metabolism; chlorophyll biosynthesis. Its function is as follows. Catalyzes the 1,3-allylic rearrangement of the homoallylic substrate isopentenyl (IPP) to its highly electrophilic allylic isomer, dimethylallyl diphosphate (DMAPP). This is Isopentenyl-diphosphate Delta-isomerase from Cereibacter sphaeroides (strain KD131 / KCTC 12085) (Rhodobacter sphaeroides).